Reading from the N-terminus, the 213-residue chain is Probable septum site-determining protein MinC (213 aa).

This sequence belongs to the MinC family. Interacts with MinD and FtsZ.

In terms of biological role, cell division inhibitor that blocks the formation of polar Z ring septums. Rapidly oscillates between the poles of the cell to destabilize FtsZ filaments that have formed before they mature into polar Z rings. Prevents FtsZ polymerization. The sequence is that of Probable septum site-determining protein MinC from Pseudothermotoga lettingae (strain ATCC BAA-301 / DSM 14385 / NBRC 107922 / TMO) (Thermotoga lettingae).